Reading from the N-terminus, the 147-residue chain is Large ribosomal subunit protein uL15 (147 aa).

Residues 1-46 are disordered; the sequence is MSIRLENLSYTPGARKEKHRKGRGHAAGKGKQAGRGQSGQKKRSTV. A compositionally biased stretch (basic residues) spans 16 to 28; the sequence is KEKHRKGRGHAAG.

The protein belongs to the universal ribosomal protein uL15 family. Part of the 50S ribosomal subunit.

Binds to the 23S rRNA. This is Large ribosomal subunit protein uL15 from Mesomycoplasma hyopneumoniae (strain 7448) (Mycoplasma hyopneumoniae).